We begin with the raw amino-acid sequence, 93 residues long: NADH-ubiquinone oxidoreductase chain 4L (93 aa).

3 helical membrane-spanning segments follow: residues 2 to 22 (ALYE…GFVL), 27 to 47 (IILM…LVLV), and 62 to 82 (IYII…LVAY).

Belongs to the complex I subunit 4L family.

It localises to the mitochondrion inner membrane. It catalyses the reaction a ubiquinone + NADH + 5 H(+)(in) = a ubiquinol + NAD(+) + 4 H(+)(out). In terms of biological role, core subunit of the mitochondrial membrane respiratory chain NADH dehydrogenase (Complex I) that is believed to belong to the minimal assembly required for catalysis. Complex I functions in the transfer of electrons from NADH to the respiratory chain. The immediate electron acceptor for the enzyme is believed to be ubiquinone. The protein is NADH-ubiquinone oxidoreductase chain 4L (ND4L) of Mycosarcoma maydis (Corn smut fungus).